A 247-amino-acid chain; its full sequence is tRNA pseudouridine synthase A (247 aa).

Asp58 acts as the Nucleophile in catalysis. Tyr116 is a substrate binding site.

The protein belongs to the tRNA pseudouridine synthase TruA family. Homodimer.

The catalysed reaction is uridine(38/39/40) in tRNA = pseudouridine(38/39/40) in tRNA. In terms of biological role, formation of pseudouridine at positions 38, 39 and 40 in the anticodon stem and loop of transfer RNAs. The protein is tRNA pseudouridine synthase A of Hydrogenobaculum sp. (strain Y04AAS1).